The sequence spans 177 residues: Glia associated membrane protein glam-1 (177 aa).

Helical transmembrane passes span P19–S39, F42–A62, and V76–A96.

It is found in the membrane. The protein is Glia associated membrane protein glam-1 of Caenorhabditis elegans.